Consider the following 110-residue polypeptide: Ig kappa chain V region 2717 (110 aa).

A framework-1 region spans residues V1–C23. A complementarity-determining-1 region spans residues Q24 to A36. Residues W37–Y51 form a framework-2 region. The interval T52–S58 is complementarity-determining-2. Positions G59 to C90 are framework-3. A complementarity-determining-3 region spans residues G91 to S99. Positions F100–K109 are framework-4.

The sequence is that of Ig kappa chain V region 2717 from Oryctolagus cuniculus (Rabbit).